The sequence spans 446 residues: Iroquois homeobox protein 5a (446 aa).

The segment at residues 117–173 is a DNA-binding region (homeobox); that stretch reads NATRDATATLKAWLNEHRKNPYPTKGEKIMLAIITKMTLTQVSTWFANARRRLKKEN. The tract at residues 175 to 312 is disordered; it reads MTWTPRNRSE…IHSPPSAPKP (138 aa). Residues 184–201 are compositionally biased toward acidic residues; sequence EDEEEDENIDLEKNDDDE. 2 stretches are compositionally biased toward basic and acidic residues: residues 202-220 and 227-258; these read PNKP…DHKL and PCDR…RTDL. Composition is skewed to polar residues over residues 264–274 and 293–303; these read KPTTSSPSVLQ and STGNSNVTSVI.

The protein belongs to the TALE/IRO homeobox family.

The protein localises to the nucleus. Transcription factor. Binds to consensus iroquois binding site (IBS) motifs 5'-ACANNTGT-3' or 5'-ACANNNTGT-3' in regulatory elements of target genes. Required, together with irx7, for hyoid joint formation; they act cell autonomously to repress expression of cartilage matrix genes, such as collagen col2a1a, within immature chondrocytes of the joint interzone. May compete with or modify Sox9a activity, thereby reducing Sox9a-mediated activation of col2a1a. Probably acts in the developing hyoid joint downstream of Bmp signaling. In concert with irx6a, plays a role in visual performance. This chain is Iroquois homeobox protein 5a (irx5a), found in Danio rerio (Zebrafish).